The sequence spans 137 residues: MLQTNRLSINAIGKIKKNWIREGINQYKKRMPDLIINESKSFNIDNIRVNNIIICLTEEGQSFNSIELTSLLLNFKNKKINFLIGDADGIPSDIKDKSNLLLSLSPLTFPHELARLILIEQIYRAISISNNSPYHRA.

S-adenosyl-L-methionine-binding positions include Leu-56, Gly-85, and 104-109 (LSPLTF).

This sequence belongs to the RNA methyltransferase RlmH family. As to quaternary structure, homodimer.

The protein localises to the cytoplasm. It catalyses the reaction pseudouridine(1915) in 23S rRNA + S-adenosyl-L-methionine = N(3)-methylpseudouridine(1915) in 23S rRNA + S-adenosyl-L-homocysteine + H(+). Specifically methylates the pseudouridine at position 1915 (m3Psi1915) in 23S rRNA. This is Ribosomal RNA large subunit methyltransferase H from Prochlorococcus marinus subsp. pastoris (strain CCMP1986 / NIES-2087 / MED4).